The chain runs to 41 residues: U15-myrmicitoxin-Tb1b (41 aa).

The signal sequence occupies residues 1–25 (MKIVKLITIFAMIATLMVTVTNGEA). Histidine 40 is subject to Histidine amide.

Expressed by the venom gland.

It is found in the secreted. Its function is as follows. Venom protein with unknown function. Does not induce paralysis when a high dose is administered by intrathoracic injection into the blowfly Lucilia caesar. The chain is U15-myrmicitoxin-Tb1b from Tetramorium bicarinatum (Tramp ant).